A 361-amino-acid polypeptide reads, in one-letter code: 4-oxalomesaconate tautomerase (361 aa).

The protein belongs to the PrpF family.

It carries out the reaction (1E)-4-oxobut-1-ene-1,2,4-tricarboxylate = 4-carboxy-2-hydroxy-cis,cis-muconate. Functionally, catalyzes the tautomerization of the 4-oxalomesaconic acid keto (OMAketo) generated by GalA dioxygenase to 4-oxalomesaconic acid enol (OMAenol). Mediates the second step in gallate degradation pathway. The sequence is that of 4-oxalomesaconate tautomerase (galD) from Pseudomonas putida (strain ATCC 47054 / DSM 6125 / CFBP 8728 / NCIMB 11950 / KT2440).